Consider the following 581-residue polypeptide: Arginine--tRNA ligase (581 aa).

A 'HIGH' region motif is present at residues 126-136 (PNLAKEMHVGH).

Belongs to the class-I aminoacyl-tRNA synthetase family. In terms of assembly, monomer.

It is found in the cytoplasm. It catalyses the reaction tRNA(Arg) + L-arginine + ATP = L-arginyl-tRNA(Arg) + AMP + diphosphate. The sequence is that of Arginine--tRNA ligase from Shewanella sp. (strain MR-7).